The sequence spans 91 residues: PqqA binding protein (91 aa).

The protein belongs to the PqqD family. Monomer. Interacts with PqqE.

It participates in cofactor biosynthesis; pyrroloquinoline quinone biosynthesis. Functionally, functions as a PqqA binding protein and presents PqqA to PqqE, in the pyrroloquinoline quinone (PQQ) biosynthetic pathway. This Pseudomonas entomophila (strain L48) protein is PqqA binding protein.